The chain runs to 251 residues: Hydroxyacylglutathione hydrolase (251 aa).

Zn(2+) contacts are provided by histidine 53, histidine 55, aspartate 57, histidine 58, histidine 110, aspartate 127, and histidine 165.

This sequence belongs to the metallo-beta-lactamase superfamily. Glyoxalase II family. As to quaternary structure, monomer. It depends on Zn(2+) as a cofactor.

The enzyme catalyses an S-(2-hydroxyacyl)glutathione + H2O = a 2-hydroxy carboxylate + glutathione + H(+). Its pathway is secondary metabolite metabolism; methylglyoxal degradation; (R)-lactate from methylglyoxal: step 2/2. Its function is as follows. Thiolesterase that catalyzes the hydrolysis of S-D-lactoyl-glutathione to form glutathione and D-lactic acid. This Escherichia coli (strain ATCC 8739 / DSM 1576 / NBRC 3972 / NCIMB 8545 / WDCM 00012 / Crooks) protein is Hydroxyacylglutathione hydrolase.